The sequence spans 370 residues: Aminomethyltransferase (370 aa).

Belongs to the GcvT family. As to quaternary structure, the glycine cleavage system is composed of four proteins: P, T, L and H.

It catalyses the reaction N(6)-[(R)-S(8)-aminomethyldihydrolipoyl]-L-lysyl-[protein] + (6S)-5,6,7,8-tetrahydrofolate = N(6)-[(R)-dihydrolipoyl]-L-lysyl-[protein] + (6R)-5,10-methylene-5,6,7,8-tetrahydrofolate + NH4(+). Its function is as follows. The glycine cleavage system catalyzes the degradation of glycine. The protein is Aminomethyltransferase of Stenotrophomonas maltophilia (strain K279a).